A 307-amino-acid chain; its full sequence is MNKKFTDEQQQQLIGHLTKKGFYRGANIKITIFLCGGDVANHQSWRHQLSQFLAKFSDVDIFYPEDLFDDLLAGQGQHSLLSLENILAEAVDVIILFPESPGSFTELGAFSNNENLRRKLICIQDAKFKSKRSFINYGPVRLLRKFNSKSVLRCSSNELKEMCDSSIDVARKLRLYKKLMASIKKVRKENKVSKDIGNILYAERFLLPCIYLLDSVNYRTLCELAFKAIKQDDVLSKIIVRSVVSRLINERKILQMTDGYQVTALGASYVRSVFDRKTLDRLRLEIMNFENRRKSTFNYDKIPYAHP.

In terms of biological role, possible ribosyltransferase/DNA-binding component of antiviral defense system retron Ec86, composed of a non-coding RNA (ncRNA), a ribosyltransferase/DNA-binding protein and a reverse transcriptase (RT). Expression of the 3-gene retron confers protection against bacteriophages T5. At multiplicity of infection (MOI) of 0.02 cultures grow normally when infected with T5 without collapsing, at MOI 2 cultures enter growth stasis. This Escherichia coli protein is Retron Ec86 putative ribosyltransferase/DNA-binding protein.